Reading from the N-terminus, the 247-residue chain is Ribonuclease 3 (247 aa).

Positions 23-149 constitute an RNase III domain; the sequence is HADLLERLGV…LLGAIFRQHG (127 aa). Position 62 (Glu-62) interacts with Mg(2+). Residue Asp-66 is part of the active site. Asp-135 and Glu-138 together coordinate Mg(2+). Residue Glu-138 is part of the active site. A DRBM domain is found at 176 to 244; it reads DWKTTLQEEL…ARQAFLKLRE (69 aa).

This sequence belongs to the ribonuclease III family. In terms of assembly, homodimer. The cofactor is Mg(2+).

It localises to the cytoplasm. The catalysed reaction is Endonucleolytic cleavage to 5'-phosphomonoester.. Its function is as follows. Digests double-stranded RNA. Involved in the processing of primary rRNA transcript to yield the immediate precursors to the large and small rRNAs (23S and 16S). Processes some mRNAs, and tRNAs when they are encoded in the rRNA operon. Processes pre-crRNA and tracrRNA of type II CRISPR loci if present in the organism. The protein is Ribonuclease 3 of Corynebacterium efficiens (strain DSM 44549 / YS-314 / AJ 12310 / JCM 11189 / NBRC 100395).